The sequence spans 333 residues: Transcription factor TGA2.2 (333 aa).

Positions 1 to 14 (MADASSRTDTSTVL) are enriched in polar residues. The tract at residues 1–48 (MADASSRTDTSTVLDTDDKNQMVDGQSGAIVPSNSSDRSDRSDKPMDQ) is disordered. Positions 37–48 (DRSDRSDKPMDQ) are enriched in basic and acidic residues. Residues 47–91 (DQKVLRRLAQNREAARKSRLRKKAYVQQLESSKLKLASLEQEINK) enclose the bZIP domain. The basic motif stretch occupies residues 49 to 69 (KVLRRLAQNREAARKSRLRKK). Residues 75–89 (LESSKLKLASLEQEI) form a leucine-zipper region. Residues 114 to 330 (AMTFDLEYAR…RALSSLWLAR (217 aa)) enclose the DOG1 domain.

It belongs to the bZIP family. In terms of assembly, interacts with NPR1/NH1. Interacts with NPR3/NH3.

The protein localises to the nucleus. Functionally, transcriptional regulator involved in defense response. The protein is Transcription factor TGA2.2 of Oryza sativa subsp. japonica (Rice).